The chain runs to 497 residues: Glycerol kinase (497 aa).

T13 lines the ADP pocket. Residues T13, T14, and S15 each coordinate ATP. T13 lines the sn-glycerol 3-phosphate pocket. R17 is a binding site for ADP. Residues R83, E84, and Y135 each contribute to the sn-glycerol 3-phosphate site. The glycerol site is built by R83, E84, and Y135. Phosphohistidine; by HPr is present on H231. Residue D245 participates in sn-glycerol 3-phosphate binding. Positions 245 and 246 each coordinate glycerol. Residues T267 and G310 each contribute to the ADP site. The ATP site is built by T267, G310, Q314, and G411. Residues G411 and N415 each coordinate ADP.

This sequence belongs to the FGGY kinase family. As to quaternary structure, homotetramer and homodimer (in equilibrium). In terms of processing, the phosphoenolpyruvate-dependent sugar phosphotransferase system (PTS), including enzyme I, and histidine-containing protein (HPr) are required for the phosphorylation, which leads to the activation of the enzyme.

The catalysed reaction is glycerol + ATP = sn-glycerol 3-phosphate + ADP + H(+). It participates in polyol metabolism; glycerol degradation via glycerol kinase pathway; sn-glycerol 3-phosphate from glycerol: step 1/1. With respect to regulation, activated by phosphorylation and inhibited by fructose 1,6-bisphosphate (FBP). Functionally, key enzyme in the regulation of glycerol uptake and metabolism. Catalyzes the phosphorylation of glycerol to yield sn-glycerol 3-phosphate. The polypeptide is Glycerol kinase (Listeria monocytogenes serovar 1/2a (strain ATCC BAA-679 / EGD-e)).